The following is a 175-amino-acid chain: uncharacterized protein (175 aa).

A run of 2 helical transmembrane segments spans residues 21–41 (IVLDFPSFLVGCVFTTMMGPI) and 50–70 (LVGLITVCKFLVIIGSIVFVI).

It localises to the membrane. This is an uncharacterized protein from Saccharomyces cerevisiae (strain ATCC 204508 / S288c) (Baker's yeast).